A 1015-amino-acid polypeptide reads, in one-letter code: MESYLNSNFDVKAKHSSEEVLEKWRNLCSVVKNPKRRFRFTANLSKRYEAAAMRRTNQEKLRIAVLVSKAAFQFISGVSPSDYKVPEEVKAAGFDICADELGSIVEGHDVKKLKFHGGVDGLSGKLKACPNAGLSTGEPEQLSKRQELFGINKFAESELRSFWVFVWEALQDMTLMILGVCAFVSLIVGIATEGWPQGSHDGLGIVASILLVVFVTATSDYRQSLQFRDLDKEKKKITVQVTRNGFRQKMSIYDLLPGDVVHLAIGDQVPADGLFLSGFSVVIDESSLTGESEPVMVTAQNPFLLSGTKVQDGSCKMLVTTVGMRTQWGKLMATLSEGGDDETPLQVKLNGVATIIGKIGLSFAIVTFAVLVQGMFMRKLSLGPHWWWSGDDALELLEYFAIAVTIVVVAVPEGLPLAVTLSLAFAMKKMMNDKALVRHLAACETMGSATTICSDKTGTLTTNHMTVVKSCICMNVQDVASKSSSLQSDIPEAALKLLLQLIFNNTGGEVVVNERGKTEILGTPTETAILELGLSLGGKFQEERQSNKVIKVEPFNSTKKRMGVVIELPEGGRIRAHTKGASEIVLAACDKVINSSGEVVPLDDESIKFLNVTIDEFANEALRTLCLAYMDIESGFSADEGIPEKGFTCIGIVGIKDPVRPGVRESVELCRRAGIMVRMVTGDNINTAKAIARECGILTDDGIAIEGPVFREKNQEEMLELIPKIQVMARSSPMDKHTLVKQLRTTFDEVVAVTGDGTNDAPALHEADIGLAMGIAGTEVAKEIADVIILDDNFSTIVTVAKWGRSVYINIQKFVQFQLTVNVVALIVNFSSACLTGSAPLTAVQLLWVNMIMDTLGALALATEPPNNELMKRMPVGRRGNFITNAMWRNILGQAVYQFIIIWILQAKGKSMFGLVGSDSTLVLNTLIFNCFVFCQVFNEVSSREMEEIDVFKGILDNYVFVVVIGATVFFQIIIIEFLGTFASTTPLTIVQWFFSIFVGFLGMPIAAGLKKIPV.

At methionine 1 the chain carries N-acetylmethionine. The Cytoplasmic portion of the chain corresponds to 1–161; it reads MESYLNSNFD…NKFAESELRS (161 aa). Positions 20–31 are interaction with calmodulin; sequence VLEKWRNLCSVV. Residue serine 45 is modified to Phosphoserine; by CPK. Residues 162 to 182 traverse the membrane as a helical segment; it reads FWVFVWEALQDMTLMILGVCA. Residues 183–200 lie on the Lumenal side of the membrane; sequence FVSLIVGIATEGWPQGSH. A helical transmembrane segment spans residues 201–221; sequence DGLGIVASILLVVFVTATSDY. Topologically, residues 222–349 are cytoplasmic; the sequence is RQSLQFRDLD…DDETPLQVKL (128 aa). The chain crosses the membrane as a helical span at residues 350–369; sequence NGVATIIGKIGLSFAIVTFA. Residues 370-399 are Lumenal-facing; the sequence is VLVQGMFMRKLSLGPHWWWSGDDALELLEY. A helical transmembrane segment spans residues 400 to 417; that stretch reads FAIAVTIVVVAVPEGLPL. Over 418–811 the chain is Cytoplasmic; sequence AVTLSLAFAM…KWGRSVYINI (394 aa). Aspartate 455 (4-aspartylphosphate intermediate) is an active-site residue. Positions 756 and 760 each coordinate Mg(2+). Residues 812 to 830 traverse the membrane as a helical segment; the sequence is QKFVQFQLTVNVVALIVNF. Topologically, residues 831-841 are lumenal; the sequence is SSACLTGSAPL. A helical transmembrane segment spans residues 842-862; the sequence is TAVQLLWVNMIMDTLGALALA. Residues 863–882 lie on the Cytoplasmic side of the membrane; that stretch reads TEPPNNELMKRMPVGRRGNF. Residues 883-905 traverse the membrane as a helical segment; the sequence is ITNAMWRNILGQAVYQFIIIWIL. Residues 906-917 are Lumenal-facing; sequence QAKGKSMFGLVG. A helical transmembrane segment spans residues 918–939; sequence SDSTLVLNTLIFNCFVFCQVFN. Over 940-957 the chain is Cytoplasmic; it reads EVSSREMEEIDVFKGILD. The helical transmembrane segment at 958-979 threads the bilayer; it reads NYVFVVVIGATVFFQIIIIEFL. Residues 980-989 are Lumenal-facing; that stretch reads GTFASTTPLT. The helical transmembrane segment at 990–1011 threads the bilayer; that stretch reads IVQWFFSIFVGFLGMPIAAGLK. Topologically, residues 1012–1015 are cytoplasmic; that stretch reads KIPV.

The protein belongs to the cation transport ATPase (P-type) (TC 3.A.3) family. Type IIB subfamily.

The protein localises to the membrane. It carries out the reaction Ca(2+)(in) + ATP + H2O = Ca(2+)(out) + ADP + phosphate + H(+). With respect to regulation, activated by calmodulin. Functionally, this magnesium-dependent enzyme catalyzes the hydrolysis of ATP coupled with the translocation of calcium from the cytosol out of the cell or into organelles. This Arabidopsis thaliana (Mouse-ear cress) protein is Putative calcium-transporting ATPase 7, plasma membrane-type (ACA7).